The sequence spans 281 residues: Protein EMBRYO DEFECTIVE 1674 (281 aa).

2 stretches are compositionally biased toward polar residues: residues Met1 to Ser14 and Pro24 to Ser41. The disordered stretch occupies residues Met1–Thr47. Residues Val66–Tyr153 enclose the SANTA domain.

Required for normal embryo development. In Arabidopsis thaliana (Mouse-ear cress), this protein is Protein EMBRYO DEFECTIVE 1674.